A 335-amino-acid chain; its full sequence is Acyl-CoA Delta(11) desaturase (335 aa).

3 helical membrane passes run 39-59, 64-84, and 98-118; these read LLTF…CFTS, TIIL…AGAH, and LQII…IHWI. Residues 84–89 carry the Histidine box-1 motif; it reads HRLWAH. The Histidine box-2 signature appears at 121 to 125; sequence HRMHH. 2 helical membrane passes run 182–202 and 213–235; these read AIPF…MYFW and TMLR…HLYG. The short motif at 261–265 is the Histidine box-3 element; that stretch reads HNYHH. The segment at 312-335 is disordered; sequence MKRTGDGTDVSGQKYSCESSEVLQ. Polar residues predominate over residues 321 to 335; it reads VSGQKYSCESSEVLQ.

The protein belongs to the fatty acid desaturase type 1 family. Fe cation is required as a cofactor. As to expression, detected in pheromone gland.

The protein resides in the membrane. The catalysed reaction is an 11,12-saturated fatty acyl-CoA + 2 Fe(II)-[cytochrome b5] + O2 + 2 H(+) = an (11Z)-Delta(11)-fatty acyl-CoA + 2 Fe(III)-[cytochrome b5] + 2 H2O. Functionally, catalyzes the formation of Delta(11) fatty acyl precursors in the pheromone gland, with a preference for myristic acid. This is Acyl-CoA Delta(11) desaturase from Choristoneura rosaceana (Oblique banded leafroller).